A 360-amino-acid chain; its full sequence is D-alanine--D-alanine ligase (360 aa).

The 210-residue stretch at 134–343 (KILAQRVGVP…YTELITRLIE (210 aa)) folds into the ATP-grasp domain. 169 to 224 (AEKLGRDMFVKPSNQGSSVGVSHVTNADEYAAALKEAFKYDDKVLVEETVPGTEVE) lines the ATP pocket. Mg(2+)-binding residues include Asp-297, Glu-310, and Asn-312.

This sequence belongs to the D-alanine--D-alanine ligase family. It depends on Mg(2+) as a cofactor. Requires Mn(2+) as cofactor.

The protein resides in the cytoplasm. It carries out the reaction 2 D-alanine + ATP = D-alanyl-D-alanine + ADP + phosphate + H(+). It functions in the pathway cell wall biogenesis; peptidoglycan biosynthesis. Cell wall formation. This Lactobacillus helveticus (strain DPC 4571) protein is D-alanine--D-alanine ligase.